The primary structure comprises 138 residues: Thioredoxin H2-1 (138 aa).

The segment at 1 to 20 is disordered; the sequence is MGGAFSTSKPKPAAGEEGGE. In terms of domain architecture, Thioredoxin spans 12–129; the sequence is PAAGEEGGES…LEKTINTLRS (118 aa). Residues cysteine 55 and cysteine 58 each act as nucleophile in the active site. A disulfide bond links cysteine 55 and cysteine 58.

Belongs to the thioredoxin family. Plant H-type subfamily.

The protein resides in the cytoplasm. Probable thiol-disulfide oxidoreductase that may be involved in the redox regulation of a number of cytosolic enzymes. This is Thioredoxin H2-1 from Oryza sativa subsp. japonica (Rice).